The sequence spans 568 residues: 2-succinyl-5-enolpyruvyl-6-hydroxy-3-cyclohexene-1-carboxylate synthase (568 aa).

The protein belongs to the TPP enzyme family. MenD subfamily. In terms of assembly, homodimer. Mg(2+) is required as a cofactor. The cofactor is Mn(2+). Thiamine diphosphate serves as cofactor.

It carries out the reaction isochorismate + 2-oxoglutarate + H(+) = 5-enolpyruvoyl-6-hydroxy-2-succinyl-cyclohex-3-ene-1-carboxylate + CO2. It participates in quinol/quinone metabolism; 1,4-dihydroxy-2-naphthoate biosynthesis; 1,4-dihydroxy-2-naphthoate from chorismate: step 2/7. The protein operates within quinol/quinone metabolism; menaquinone biosynthesis. Its function is as follows. Catalyzes the thiamine diphosphate-dependent decarboxylation of 2-oxoglutarate and the subsequent addition of the resulting succinic semialdehyde-thiamine pyrophosphate anion to isochorismate to yield 2-succinyl-5-enolpyruvyl-6-hydroxy-3-cyclohexene-1-carboxylate (SEPHCHC). This chain is 2-succinyl-5-enolpyruvyl-6-hydroxy-3-cyclohexene-1-carboxylate synthase, found in Mannheimia succiniciproducens (strain KCTC 0769BP / MBEL55E).